The following is a 408-amino-acid chain: tRNA pseudouridine synthase D (408 aa).

Asp-76 acts as the Nucleophile in catalysis. One can recognise a TRUD domain in the interval 149–362 (GFINYYDSQR…NSFERKVRIL (214 aa)).

This sequence belongs to the pseudouridine synthase TruD family.

It catalyses the reaction uridine(13) in tRNA = pseudouridine(13) in tRNA. Responsible for synthesis of pseudouridine from uracil-13 in transfer RNAs. The protein is tRNA pseudouridine synthase D of Leptospira interrogans serogroup Icterohaemorrhagiae serovar Lai (strain 56601).